The primary structure comprises 505 residues: Maturase K (505 aa).

The protein belongs to the intron maturase 2 family. MatK subfamily.

The protein resides in the plastid. Its subcellular location is the chloroplast. Functionally, usually encoded in the trnK tRNA gene intron. Probably assists in splicing its own and other chloroplast group II introns. This Ficus carica (Common fig) protein is Maturase K.